The following is a 159-amino-acid chain: Ribosomal RNA large subunit methyltransferase H (159 aa).

S-adenosyl-L-methionine-binding positions include L76, G107, and L126–M131.

The protein belongs to the RNA methyltransferase RlmH family. In terms of assembly, homodimer.

It is found in the cytoplasm. It catalyses the reaction pseudouridine(1915) in 23S rRNA + S-adenosyl-L-methionine = N(3)-methylpseudouridine(1915) in 23S rRNA + S-adenosyl-L-homocysteine + H(+). In terms of biological role, specifically methylates the pseudouridine at position 1915 (m3Psi1915) in 23S rRNA. The protein is Ribosomal RNA large subunit methyltransferase H of Acinetobacter baylyi (strain ATCC 33305 / BD413 / ADP1).